Consider the following 93-residue polypeptide: LSM complex subunit lsm3 (93 aa).

One can recognise a Sm domain in the interval Glu9–Asn93. Residue Ser84 is modified to Phosphoserine.

It belongs to the snRNP Sm proteins family. As to quaternary structure, component of the heptameric LSM1-LSM7 complex that forms a seven-membered ring structure with a donut shape. The LSm subunits are arranged in the order lsm1, lsm2, lsm3, lsm6, lsm5, lsm7 and lsm4. Component of the heptameric LSM2-LSM8 complex that forms a seven-membered ring structure with a donut shape. The LSm subunits are arranged in the order lsm8, lsm2, lsm3, lsm6, lsm5, lsm7 and lsm4.

Its subcellular location is the nucleus. It is found in the cytoplasm. Its function is as follows. Component of LSm protein complexes, which are involved in RNA processing and may function in a chaperone-like manner. Component of the cytoplasmic LSM1-LSM7 complex which is involved in mRNA degradation by activating the decapping step. The LSM1-LSM7 complex loads onto the 3'-end of single stranded RNA. Component of the nuclear LSM2-LSM8 complex, which is involved in spliceosome assembly. The LSM2-LSM8 complex plays a role in the biogenesis of the spliceosomal U4/U6-U5 tri-snRNP complex by accelerating prp24-mediated annealing of U4/U6 di-snRNA. The LSM2-LSM8 complex binds U6 snRNA terminating with a cyclic 2',3' phosphate group; RNA with an unmodified 3' hydroxyl or non-cyclic 3' phosphate is bound less tightly. The sequence is that of LSM complex subunit lsm3 (lsm3) from Schizosaccharomyces pombe (strain 972 / ATCC 24843) (Fission yeast).